We begin with the raw amino-acid sequence, 497 residues long: NAD(P)H-quinone oxidoreductase chain 4, chloroplastic (497 aa).

14 helical membrane passes run 5–25 (VPWL…IPIL), 36–56 (YTLG…YCHF), 88–108 (LGLV…AWPI), 112–132 (TRLF…LFVS), 135–155 (ILLF…LLCL), 168–188 (FVLY…TMSF), 212–232 (VLIY…FPFH), 243–263 (HYST…YGLI), 275–295 (FLLG…ASLI), 306–326 (IAYS…SFTE), 331–351 (GAIL…FLAG), 387–407 (LALP…GVVT), 418–438 (GITV…LSML), and 463–483 (LFIL…PNLI).

This sequence belongs to the complex I subunit 4 family.

Its subcellular location is the plastid. The protein resides in the chloroplast thylakoid membrane. The enzyme catalyses a plastoquinone + NADH + (n+1) H(+)(in) = a plastoquinol + NAD(+) + n H(+)(out). It carries out the reaction a plastoquinone + NADPH + (n+1) H(+)(in) = a plastoquinol + NADP(+) + n H(+)(out). This Adiantum capillus-veneris (Maidenhair fern) protein is NAD(P)H-quinone oxidoreductase chain 4, chloroplastic.